Consider the following 150-residue polypeptide: 3-hydroxyacyl-[acyl-carrier-protein] dehydratase FabZ (150 aa).

The active site involves H57.

Belongs to the thioester dehydratase family. FabZ subfamily.

Its subcellular location is the cytoplasm. The catalysed reaction is a (3R)-hydroxyacyl-[ACP] = a (2E)-enoyl-[ACP] + H2O. In terms of biological role, involved in unsaturated fatty acids biosynthesis. Catalyzes the dehydration of short chain beta-hydroxyacyl-ACPs and long chain saturated and unsaturated beta-hydroxyacyl-ACPs. This is 3-hydroxyacyl-[acyl-carrier-protein] dehydratase FabZ from Mannheimia succiniciproducens (strain KCTC 0769BP / MBEL55E).